We begin with the raw amino-acid sequence, 398 residues long: Nicotinate phosphoribosyltransferase (398 aa).

Residue histidine 222 is modified to Phosphohistidine; by autocatalysis.

It belongs to the NAPRTase family. In terms of processing, transiently phosphorylated on a His residue during the reaction cycle. Phosphorylation strongly increases the affinity for substrates and increases the rate of nicotinate D-ribonucleotide production. Dephosphorylation regenerates the low-affinity form of the enzyme, leading to product release.

The catalysed reaction is nicotinate + 5-phospho-alpha-D-ribose 1-diphosphate + ATP + H2O = nicotinate beta-D-ribonucleotide + ADP + phosphate + diphosphate. It functions in the pathway cofactor biosynthesis; NAD(+) biosynthesis; nicotinate D-ribonucleotide from nicotinate: step 1/1. Its function is as follows. Catalyzes the synthesis of beta-nicotinate D-ribonucleotide from nicotinate and 5-phospho-D-ribose 1-phosphate at the expense of ATP. The chain is Nicotinate phosphoribosyltransferase from Acidovorax ebreus (strain TPSY) (Diaphorobacter sp. (strain TPSY)).